Consider the following 71-residue polypeptide: Bacteriocin carnobacteriocin-A (71 aa).

Residues 1–18 constitute a propeptide that is removed on maturation; the sequence is MNNVKELSIKEMQQVTGG. Cys-40 and Cys-69 are disulfide-bonded.

The protein localises to the secreted. In terms of biological role, has antibacterial activity. This chain is Bacteriocin carnobacteriocin-A (cbnBA), found in Carnobacterium maltaromaticum (Carnobacterium piscicola).